A 336-amino-acid chain; its full sequence is Tetraacyldisaccharide 4'-kinase (336 aa).

Position 60–67 (60–67 (TAGGNGKT)) interacts with ATP.

This sequence belongs to the LpxK family.

It catalyses the reaction a lipid A disaccharide + ATP = a lipid IVA + ADP + H(+). It participates in glycolipid biosynthesis; lipid IV(A) biosynthesis; lipid IV(A) from (3R)-3-hydroxytetradecanoyl-[acyl-carrier-protein] and UDP-N-acetyl-alpha-D-glucosamine: step 6/6. Functionally, transfers the gamma-phosphate of ATP to the 4'-position of a tetraacyldisaccharide 1-phosphate intermediate (termed DS-1-P) to form tetraacyldisaccharide 1,4'-bis-phosphate (lipid IVA). This is Tetraacyldisaccharide 4'-kinase from Vibrio cholerae serotype O1 (strain ATCC 39315 / El Tor Inaba N16961).